Here is a 467-residue protein sequence, read N- to C-terminus: MAKKRESPKLIKIKDAIKLINQQVSLIGIVLEQREPKQCRNNDWICTLRIIDDTYPSPGLTVNVFSKTLEQLPQIKNHDDMILFTRIKMQTFDSGERVNAACSRWVSSFALFEGVDFVCYQCSTNFHEEEALYKSAMDDLRKVFAGCSQVIKAMQSISYRTKPCSEVFSFLREIKIGKRFDLVCRILHADEDTSAVFVWDGTDAPPASILAKRSEEDKAFSSLSVHTLLSRDVLLSFPTVGTILRVHLSSHLFYRVKPGDWVKLYHLLCEVDRGSWVIKVTSSTKVHHLAQDDRLVEKIMRIYDKRLSSKLGHISFWCFPSPPGLTETDDNCAPFVTLMDIITFPKVTCKYRCIVRVVAAYPWQVEDFCSDENRRHHQVLLTLEDSTATLEAFLCNKDAEYFWGLGFQDTETLRKKRNWLLGIRESSNFVAPRNPPWIECCILSYYTNKADPWNTRLYRIFGTRLLH.

Belongs to the telombin family. Component of the telomerase holoenzyme complex at least composed of TERT, CBF5 and POT1a. The RNA molecule associated to the telomerase complex, and providing a template for telomeric DNA synthesis, is most likely TR and not TER1 as described previously. Interacts with the N-terminal part of TERT. Interacts with CBF5. Interacts with CTC1 and STN1. Does not interact with TEN1. As to expression, expressed in roots, rosette leaves, cauline leaves, stems and flowers.

It localises to the nucleus. Its subcellular location is the chromosome. The protein resides in the telomere. It is found in the nucleolus. The protein localises to the cytoplasm. Functionally, component of the telomerase ribonucleoprotein (RNP) complex that is essential for the positive regulation of telomere length. Binds RNA non-specifically. Binds specifically single-stranded telomeric DNA. Not required to recruit telomerase to telomeres, but stimulates TER1 RNP repeat addition processivity. The polypeptide is Protection of telomeres protein 1a (Arabidopsis thaliana (Mouse-ear cress)).